The sequence spans 91 residues: DNA-directed RNA polymerase subunit omega (91 aa).

This sequence belongs to the RNA polymerase subunit omega family. As to quaternary structure, the RNAP catalytic core consists of 2 alpha, 1 beta, 1 beta' and 1 omega subunit. When a sigma factor is associated with the core the holoenzyme is formed, which can initiate transcription.

It carries out the reaction RNA(n) + a ribonucleoside 5'-triphosphate = RNA(n+1) + diphosphate. Functionally, promotes RNA polymerase assembly. Latches the N- and C-terminal regions of the beta' subunit thereby facilitating its interaction with the beta and alpha subunits. The polypeptide is DNA-directed RNA polymerase subunit omega (Photorhabdus laumondii subsp. laumondii (strain DSM 15139 / CIP 105565 / TT01) (Photorhabdus luminescens subsp. laumondii)).